Consider the following 67-residue polypeptide: Large ribosomal subunit protein uL29 (67 aa).

Belongs to the universal ribosomal protein uL29 family.

The polypeptide is Large ribosomal subunit protein uL29 (Sphingopyxis alaskensis (strain DSM 13593 / LMG 18877 / RB2256) (Sphingomonas alaskensis)).